The sequence spans 355 residues: Heat-inducible transcription repressor HrcA (355 aa).

The protein belongs to the HrcA family.

Its function is as follows. Negative regulator of class I heat shock genes (grpE-dnaK-dnaJ and groELS operons). Prevents heat-shock induction of these operons. The protein is Heat-inducible transcription repressor HrcA of Prosthecochloris aestuarii (strain DSM 271 / SK 413).